A 216-amino-acid chain; its full sequence is Thiamine-phosphate synthase (216 aa).

Residues 41 to 45 and asparagine 73 each bind 4-amino-2-methyl-5-(diphosphooxymethyl)pyrimidine; that span reads QYREK. Mg(2+)-binding residues include aspartate 74 and aspartate 93. Serine 111 contributes to the 4-amino-2-methyl-5-(diphosphooxymethyl)pyrimidine binding site. 137–139 is a 2-[(2R,5Z)-2-carboxy-4-methylthiazol-5(2H)-ylidene]ethyl phosphate binding site; it reads TTT. Lysine 140 is a binding site for 4-amino-2-methyl-5-(diphosphooxymethyl)pyrimidine. 2-[(2R,5Z)-2-carboxy-4-methylthiazol-5(2H)-ylidene]ethyl phosphate is bound by residues glycine 168 and 188–189; that span reads VS.

Belongs to the thiamine-phosphate synthase family. Mg(2+) is required as a cofactor.

The catalysed reaction is 2-[(2R,5Z)-2-carboxy-4-methylthiazol-5(2H)-ylidene]ethyl phosphate + 4-amino-2-methyl-5-(diphosphooxymethyl)pyrimidine + 2 H(+) = thiamine phosphate + CO2 + diphosphate. The enzyme catalyses 2-(2-carboxy-4-methylthiazol-5-yl)ethyl phosphate + 4-amino-2-methyl-5-(diphosphooxymethyl)pyrimidine + 2 H(+) = thiamine phosphate + CO2 + diphosphate. It catalyses the reaction 4-methyl-5-(2-phosphooxyethyl)-thiazole + 4-amino-2-methyl-5-(diphosphooxymethyl)pyrimidine + H(+) = thiamine phosphate + diphosphate. The protein operates within cofactor biosynthesis; thiamine diphosphate biosynthesis; thiamine phosphate from 4-amino-2-methyl-5-diphosphomethylpyrimidine and 4-methyl-5-(2-phosphoethyl)-thiazole: step 1/1. Functionally, condenses 4-methyl-5-(beta-hydroxyethyl)thiazole monophosphate (THZ-P) and 2-methyl-4-amino-5-hydroxymethyl pyrimidine pyrophosphate (HMP-PP) to form thiamine monophosphate (TMP). The protein is Thiamine-phosphate synthase of Chloroflexus aurantiacus (strain ATCC 29366 / DSM 635 / J-10-fl).